Reading from the N-terminus, the 109-residue chain is COX assembly mitochondrial protein 2 (109 aa).

Residues 10–54 enclose the CHCH domain; that stretch reads FHSCLDFINALDKCHQKEYYKRIFGLCNNEKDALNKCLKEASLNN. Short sequence motifs (cx9C motif) lie at residues 13–23 and 36–46; these read CLDFINALDKC and CNNEKDALNKC. Cystine bridges form between cysteine 13–cysteine 46 and cysteine 23–cysteine 36.

This sequence belongs to the CMC family. In terms of assembly, interacts with CMC1.

The protein resides in the mitochondrion inner membrane. The protein localises to the mitochondrion intermembrane space. Its function is as follows. Required for mitochondrial cytochrome c oxidase (COX) assembly and respiration. May be involved in copper trafficking and distribution to mitochondrial COX and SOD1. This Saccharomyces cerevisiae (strain ATCC 204508 / S288c) (Baker's yeast) protein is COX assembly mitochondrial protein 2 (CMC2).